The sequence spans 301 residues: 3-methyl-2-oxobutanoate hydroxymethyltransferase (301 aa).

Residues 1–28 show a composition bias toward low complexity; it reads MATSNSSDSSMSAEVPAPYGNGPANAPA. The disordered stretch occupies residues 1-37; that stretch reads MATSNSSDSSMSAEVPAPYGNGPANAPATPSDTAKKP. Mg(2+) is bound by residues Asp82 and Asp121. 3-methyl-2-oxobutanoate-binding positions include 82 to 83, Asp121, and Lys151; that span reads DS. Residue Glu153 participates in Mg(2+) binding. Glu219 functions as the Proton acceptor in the catalytic mechanism.

The protein belongs to the PanB family. In terms of assembly, homodecamer; pentamer of dimers. Requires Mg(2+) as cofactor.

Its subcellular location is the cytoplasm. The catalysed reaction is 3-methyl-2-oxobutanoate + (6R)-5,10-methylene-5,6,7,8-tetrahydrofolate + H2O = 2-dehydropantoate + (6S)-5,6,7,8-tetrahydrofolate. It functions in the pathway cofactor biosynthesis; (R)-pantothenate biosynthesis; (R)-pantoate from 3-methyl-2-oxobutanoate: step 1/2. Catalyzes the reversible reaction in which hydroxymethyl group from 5,10-methylenetetrahydrofolate is transferred onto alpha-ketoisovalerate to form ketopantoate. In Arthrobacter sp. (strain FB24), this protein is 3-methyl-2-oxobutanoate hydroxymethyltransferase.